A 130-amino-acid polypeptide reads, in one-letter code: Albumin-1 A (130 aa).

The N-terminal stretch at 1–26 (MASVKLASLIVLFATLGMFLTKNVGA) is a signal peptide. 3 disulfide bridges follow: C29-C46, C33-C48, and C41-C58. Propeptides lie at residues 64 to 69 (VFLRTN) and 123 to 130 (LLKSVSTA).

The C-terminal glycine may be removed from PA1b. In terms of tissue distribution, major component of both the cotyledons and embryonic axes of mature seeds.

Its function is as follows. PA1b binds to basic 7S globulin (BG) and stimulates its phosphorylation activity. Involved in the signal transduction system to regulate the growth and differentiation as a hormone peptide. Toxic to various insects through binding to a high affinity binding site in the insect gut. The polypeptide is Albumin-1 A (Pisum sativum (Garden pea)).